The chain runs to 136 residues: Small ribosomal subunit protein uS19 (136 aa).

Belongs to the universal ribosomal protein uS19 family.

Functionally, protein S19 forms a complex with S13 that binds strongly to the 16S ribosomal RNA. This Methanothermobacter thermautotrophicus (strain ATCC 29096 / DSM 1053 / JCM 10044 / NBRC 100330 / Delta H) (Methanobacterium thermoautotrophicum) protein is Small ribosomal subunit protein uS19 (rps19).